We begin with the raw amino-acid sequence, 1004 residues long: Caspase recruitment domain-containing protein 14 (1004 aa).

Residues 15–107 enclose the CARD domain; the sequence is DEETLWEMME…DVYTLVTGLQ (93 aa). Residues 128–409 adopt a coiled-coil conformation; the sequence is LAGAIGSLQE…RTQLRQLQAE (282 aa). The segment at 409–568 is maintains the protein in an inactive state; that stretch reads EPPGVLKQEA…RRPARRILSQ (160 aa). Ser544 carries the phosphoserine modification. One can recognise a PDZ domain in the interval 568-658; it reads QVTMLAFQGD…FCCLSVKVNT (91 aa). The Guanylate kinase-like domain occupies 807–990; the sequence is AESCLTLVPY…LLSCVRQAIA (184 aa).

In terms of assembly, interacts (via CARD domain) with BCL10 (via CARD domain). Forms a complex with MALT1 and BCL10; resulting in the formation of a CBM (CARD14-BLC10-MALT1) complex. Interacts with TRAF2, TRAF3 and TRAF6. Isoform 1 is detected in placenta and epidermal keratinocytes. Isoform 2 is detected in leukocytes and fetal brain.

It localises to the cytoplasm. Acts as a scaffolding protein that can activate the inflammatory transcription factor NF-kappa-B and p38/JNK MAP kinase signaling pathways. Forms a signaling complex with BCL10 and MALT1, and activates MALT1 proteolytic activity and inflammatory gene expression. MALT1 is indispensable for CARD14-induced activation of NF-kappa-B and p38/JNK MAP kinases. May play a role in signaling mediated by TRAF2, TRAF3 and TRAF6 and protects cells against apoptosis. In terms of biological role, not able to activate the inflammatory transcription factor NF-kappa-B and may function as a dominant negative regulator. In Homo sapiens (Human), this protein is Caspase recruitment domain-containing protein 14 (CARD14).